The sequence spans 116 residues: Large ribosomal subunit protein bL17 (116 aa).

The protein belongs to the bacterial ribosomal protein bL17 family. As to quaternary structure, part of the 50S ribosomal subunit. Contacts protein L32.

The polypeptide is Large ribosomal subunit protein bL17 (Picosynechococcus sp. (strain ATCC 27264 / PCC 7002 / PR-6) (Agmenellum quadruplicatum)).